The primary structure comprises 773 residues: Ethylene receptor 2 (773 aa).

Helical transmembrane passes span 4–24 (EIAS…VLAI), 53–73 (VSDF…LYFV), 82–102 (WVLF…LLHG), and 122–142 (LTAL…PLLL). Residues Cys-94 and His-98 each coordinate Cu cation. A GAF domain is found at 187 to 331 (DRHTILYTTL…VVADQVTVAL (145 aa)). In terms of domain architecture, Histidine kinase spans 374 to 614 (TMSEGMRRPM…PETMSLLLRF (241 aa)). One can recognise a Response regulatory domain in the interval 647–766 (QVLLVDTNDS…AMESELRRVL (120 aa)). Asp-702 is subject to 4-aspartylphosphate. A Glycyl lysine isopeptide (Lys-Gly) (interchain with G-Cter in ubiquitin) cross-link involves residue Lys-751.

The protein belongs to the ethylene receptor family. Heteromer with ETR1. Binds to MRF3/ECIP1. Cu cation is required as a cofactor. In terms of processing, autophosphorylated predominantly on Ser residues. In terms of tissue distribution, expressed in seedlings, roots, leaves, flowers, mature siliques, shoot apical meristems, leaf primordia, inflorescence meristems, young floral meristems, developing petals, carpels and ovules. Low expression in stamens.

The protein resides in the endoplasmic reticulum membrane. Ethylene receptor related to bacterial two-component regulators. Acts as a redundant negative regulator of ethylene signaling. The sequence is that of Ethylene receptor 2 from Arabidopsis thaliana (Mouse-ear cress).